The sequence spans 417 residues: Serine hydroxymethyltransferase 4 (417 aa).

(6S)-5,6,7,8-tetrahydrofolate is bound by residues Leu-121 and 125–127 (GHL). Lys-230 carries the N6-(pyridoxal phosphate)lysine modification. 355-357 (SPF) provides a ligand contact to (6S)-5,6,7,8-tetrahydrofolate.

The protein belongs to the SHMT family. Homodimer. It depends on pyridoxal 5'-phosphate as a cofactor.

The protein localises to the cytoplasm. It carries out the reaction (6R)-5,10-methylene-5,6,7,8-tetrahydrofolate + glycine + H2O = (6S)-5,6,7,8-tetrahydrofolate + L-serine. Its pathway is one-carbon metabolism; tetrahydrofolate interconversion. It participates in amino-acid biosynthesis; glycine biosynthesis; glycine from L-serine: step 1/1. Its function is as follows. Catalyzes the reversible interconversion of serine and glycine with tetrahydrofolate (THF) serving as the one-carbon carrier. This reaction serves as the major source of one-carbon groups required for the biosynthesis of purines, thymidylate, methionine, and other important biomolecules. Also exhibits THF-independent aldolase activity toward beta-hydroxyamino acids, producing glycine and aldehydes, via a retro-aldol mechanism. This is Serine hydroxymethyltransferase 4 from Colwellia psychrerythraea (strain 34H / ATCC BAA-681) (Vibrio psychroerythus).